Here is a 320-residue protein sequence, read N- to C-terminus: Malate dehydrogenase (320 aa).

Residues 10 to 15 (GAGQIG) and Asp34 each bind NAD(+). Arg83 and Arg89 together coordinate substrate. NAD(+) contacts are provided by residues Asn96 and 119 to 121 (ITN). Residues Asn121 and Arg152 each contribute to the substrate site. Catalysis depends on His176, which acts as the Proton acceptor.

Belongs to the LDH/MDH superfamily. MDH type 3 family.

It carries out the reaction (S)-malate + NAD(+) = oxaloacetate + NADH + H(+). Functionally, catalyzes the reversible oxidation of malate to oxaloacetate. The chain is Malate dehydrogenase from Methylobacterium nodulans (strain LMG 21967 / CNCM I-2342 / ORS 2060).